The primary structure comprises 221 residues: Adenylate kinase (221 aa).

Residue 10–15 (GAGKGT) coordinates ATP. The NMP stretch occupies residues 30 to 59 (STGDMLRAAVKAGTPLGLEAKRFMDAGELV). AMP contacts are provided by residues Thr31, Arg36, 57-59 (ELV), 85-88 (GFPR), and Gln92. An LID region spans residues 122–159 (GRRSHAASGRTYHVKFNPPKVEGVDDMTGEPLIQRDDD). Residues Arg123 and 132 to 133 (TY) each bind ATP. 2 residues coordinate AMP: Arg156 and Arg167. An ATP-binding site is contributed by Gly207.

The protein belongs to the adenylate kinase family. As to quaternary structure, monomer.

It is found in the cytoplasm. It carries out the reaction AMP + ATP = 2 ADP. It functions in the pathway purine metabolism; AMP biosynthesis via salvage pathway; AMP from ADP: step 1/1. Its function is as follows. Catalyzes the reversible transfer of the terminal phosphate group between ATP and AMP. Plays an important role in cellular energy homeostasis and in adenine nucleotide metabolism. This chain is Adenylate kinase, found in Paraburkholderia phytofirmans (strain DSM 17436 / LMG 22146 / PsJN) (Burkholderia phytofirmans).